An 85-amino-acid polypeptide reads, in one-letter code: Beta-insect depressant toxin Lqh-dprIT3h (85 aa).

Residues M1–A21 form the signal peptide. The LCN-type CS-alpha/beta domain maps to D22–G82. Disulfide bonds link C31–C81, C35–C56, C42–C63, and C46–C65. G82 carries the glycine amide modification.

It belongs to the long (4 C-C) scorpion toxin superfamily. Sodium channel inhibitor family. Beta subfamily. In terms of tissue distribution, expressed by the venom gland.

The protein localises to the secreted. Functionally, depressant insect beta-toxins cause a transient contraction paralysis followed by a slow flaccid paralysis. They bind voltage-independently at site-4 of sodium channels (Nav) and block action potentials, primarily by depolarizing the axonal membrane and suppressing the sodium current. This depressant toxin is active only on insects. It is found in a relatively small amount in the venom. In Leiurus hebraeus (Hebrew deathstalker scorpion), this protein is Beta-insect depressant toxin Lqh-dprIT3h.